The chain runs to 329 residues: Oligopeptide transport ATP-binding protein AppF (329 aa).

The 252-residue stretch at 10 to 261 folds into the ABC transporter domain; it reads LELRDVKKYF…PLHPYTQALL (252 aa). 53–60 contributes to the ATP binding site; that stretch reads GESGCGKS.

It belongs to the ABC transporter superfamily.

The protein resides in the cell membrane. This protein is a component of an oligopeptide permease, a binding protein-dependent transport system. This APP system can completely substitute for the OPP system in both sporulation and genetic competence, though, unlike OPP, is incapable of transporting tripeptides. Probably responsible for energy coupling to the transport system. The polypeptide is Oligopeptide transport ATP-binding protein AppF (appF) (Bacillus subtilis (strain 168)).